Reading from the N-terminus, the 715-residue chain is Beta-galactosidase 9 (715 aa).

Positions 1 to 20 (MSGGAVAFLLLVAAAAVANA) are cleaved as a signal peptide. Glu-178 acts as the Proton donor in catalysis. The active-site Nucleophile is Glu-247.

It belongs to the glycosyl hydrolase 35 family.

The protein localises to the secreted. It localises to the extracellular space. Its subcellular location is the apoplast. The catalysed reaction is Hydrolysis of terminal non-reducing beta-D-galactose residues in beta-D-galactosides.. This is Beta-galactosidase 9 from Oryza sativa subsp. japonica (Rice).